Consider the following 972-residue polypeptide: MTSQGRTRTLLNLTPIRLIVALFLVAAAVGLSIGLTYYFTRKAFDTSEKPGKDDTGGKDKDNSPSAAELLLPSNIKPLSYDLTIKTYLPGYVDFPPEKNLTFDGRVEISMVVIEPTKSIVLNSKKISVIPQECELVSGDKKLEIESVKEHPRLEKVEFLIKSQLEKDQQILLKVGYIGLISNSFGGIYQTTYTTPDGTPKIAAVSQNEPIDARRMVPCMDEPKYKANWTVTVIHPKGTKAVSNGIEVNGDGEISGDWITSKFLTTPRMSSYLLAVMVSEFEYIEGETKTGVRFRIWSRPEAKKMTQYALQSGIKCIEFYEDFFDIRFPLKKQDMIALPDFSAGAMENWGLITYRENSLLYDDRFYAPMNKQRIARIVAHELAHQWFGDLVTMKWWDNLWLNEGFARFTEFIGAGQITQDDARMRNYFLIDVLERALKADSVASSHPLSFRIDKAAEVEEAFDDITYAKGASVLTMLRALIGEEKHKHAVSQYLKKFSYSNAEATDLWAVFDEVVTDVEGPDGKPMKTTEFASQWTTQMGFPVISVAEFNSTTLKLTQSRYEANKDAVEKEKYRHPKYGFKWDIPLWYQEGDKKEIKRTWLRRDEPLYLHVSDAGAPFVVNADRYGFYRQNHDANGWKKIIKQLKDNHEVYSPRTRNAIISDAFAAAATDAIEYETVFELLNYAEKETEYLPLEIAMSGISSILKYFGTEPEAKPAQTYMMNILKPMYEKSSIDFIANNYRNDKLFFQINLQKDVIDMFCALGSQDCRKKYKKLFDDEVMNKCRDGQAATECVRIAAPLRSSVYCYGVKEGGDYASDKVMELYTAETLALEKDFLRLALGCHKDVTALKGLLLRALDRNSSFVRMQDIPSAFNDVAANPIGGEFIFNFLIERWPDIIESIGTKHTYVEKVIPACTSGIRSQQQIDQLKNLQKNGMNARQFGAFDKAIERAQNRVDWIKKHFQKLAAFFKKATL.

Residues 2-17 lie on the Cytoplasmic side of the membrane; the sequence is TSQGRTRTLLNLTPIR. A helical; Signal-anchor for type II membrane protein transmembrane segment spans residues 18–39; that stretch reads LIVALFLVAAAVGLSIGLTYYF. Residues 40-972 lie on the Extracellular side of the membrane; the sequence is TRKAFDTSEK…LAAFFKKATL (933 aa). The span at 47 to 62 shows a compositional bias: basic and acidic residues; sequence SEKPGKDDTGGKDKDN. Residues 47 to 66 form a disordered region; that stretch reads SEKPGKDDTGGKDKDNSPSA. The N-linked (GlcNAc...) asparagine glycan is linked to asparagine 99. Glutamate 208 contacts substrate. An N-linked (GlcNAc...) asparagine glycan is attached at asparagine 227. Residue 343–347 participates in substrate binding; sequence GAMEN. Histidine 379 provides a ligand contact to Zn(2+). Glutamate 380 acts as the Proton acceptor in catalysis. The Zn(2+) site is built by histidine 383 and glutamate 402. Residue asparagine 549 is glycosylated (N-linked (GlcNAc...) asparagine). Intrachain disulfides connect cysteine 759–cysteine 766 and cysteine 804–cysteine 840. Residue asparagine 858 is glycosylated (N-linked (GlcNAc...) asparagine).

The protein belongs to the peptidase M1 family. Zn(2+) serves as cofactor.

The protein localises to the membrane. It catalyses the reaction Release of an N-terminal amino acid, Xaa-|-Yaa- from a peptide, amide or arylamide. Xaa is preferably Ala, but may be most amino acids including Pro (slow action). When a terminal hydrophobic residue is followed by a prolyl residue, the two may be released as an intact Xaa-Pro dipeptide.. The sequence is that of Aminopeptidase N from Haemonchus contortus (Barber pole worm).